The primary structure comprises 167 residues: Small ribosomal subunit protein uS5 (167 aa).

The region spanning 12–75 (LQEKLVQVNR…DAARKNMITV (64 aa)) is the S5 DRBM domain.

It belongs to the universal ribosomal protein uS5 family. Part of the 30S ribosomal subunit. Contacts proteins S4 and S8.

With S4 and S12 plays an important role in translational accuracy. In terms of biological role, located at the back of the 30S subunit body where it stabilizes the conformation of the head with respect to the body. This Hahella chejuensis (strain KCTC 2396) protein is Small ribosomal subunit protein uS5.